Here is a 121-residue protein sequence, read N- to C-terminus: Small ribosomal subunit protein uS13 (121 aa).

The interval 91 to 121 (HRRGLPVRGQKTKNNARTRKGPVKTVANKKK) is disordered.

It belongs to the universal ribosomal protein uS13 family. As to quaternary structure, part of the 30S ribosomal subunit. Forms a loose heterodimer with protein S19. Forms two bridges to the 50S subunit in the 70S ribosome.

Located at the top of the head of the 30S subunit, it contacts several helices of the 16S rRNA. In the 70S ribosome it contacts the 23S rRNA (bridge B1a) and protein L5 of the 50S subunit (bridge B1b), connecting the 2 subunits; these bridges are implicated in subunit movement. Contacts the tRNAs in the A and P-sites. In Staphylococcus haemolyticus (strain JCSC1435), this protein is Small ribosomal subunit protein uS13.